The chain runs to 266 residues: UPF0328 protein ECU05_1610/ECU11_0120 (266 aa).

It belongs to the UPF0328 family.

In Encephalitozoon cuniculi (strain GB-M1) (Microsporidian parasite), this protein is UPF0328 protein ECU05_1610/ECU11_0120.